Here is a 291-residue protein sequence, read N- to C-terminus: Putative butyrophilin-like protein 10 pseudogene (291 aa).

The N-terminal stretch at 1-26 (MAVTCDPEAFLSICFVTLVFLQLPLA) is a signal peptide. The Ig-like V-type domain maps to 27 to 146 (SIWKADFDVT…GEATVQVQVA (120 aa)). Topologically, residues 27 to 254 (SIWKADFDVT…RSSQFTAWKA (228 aa)) are extracellular. The cysteines at positions 54 and 128 are disulfide-linked. N-linked (GlcNAc...) asparagine glycosylation is present at N59. The helical transmembrane segment at 255-275 (ALPLILVAMGLVIAGGICIFW) threads the bilayer. Residues 276-291 (KRQREKNKASLEEERE) lie on the Cytoplasmic side of the membrane.

It belongs to the immunoglobulin superfamily. BTN/MOG family.

It is found in the membrane. The protein is Putative butyrophilin-like protein 10 pseudogene of Homo sapiens (Human).